A 219-amino-acid polypeptide reads, in one-letter code: Phosphatidylserine decarboxylase proenzyme (219 aa).

S188 serves as the catalytic Schiff-base intermediate with substrate; via pyruvic acid. S188 carries the post-translational modification Pyruvic acid (Ser); by autocatalysis.

The protein belongs to the phosphatidylserine decarboxylase family. PSD-A subfamily. In terms of assembly, heterodimer of a large membrane-associated beta subunit and a small pyruvoyl-containing alpha subunit. Requires pyruvate as cofactor. Post-translationally, is synthesized initially as an inactive proenzyme. Formation of the active enzyme involves a self-maturation process in which the active site pyruvoyl group is generated from an internal serine residue via an autocatalytic post-translational modification. Two non-identical subunits are generated from the proenzyme in this reaction, and the pyruvate is formed at the N-terminus of the alpha chain, which is derived from the carboxyl end of the proenzyme. The post-translation cleavage follows an unusual pathway, termed non-hydrolytic serinolysis, in which the side chain hydroxyl group of the serine supplies its oxygen atom to form the C-terminus of the beta chain, while the remainder of the serine residue undergoes an oxidative deamination to produce ammonia and the pyruvoyl prosthetic group on the alpha chain.

It is found in the cell membrane. It carries out the reaction a 1,2-diacyl-sn-glycero-3-phospho-L-serine + H(+) = a 1,2-diacyl-sn-glycero-3-phosphoethanolamine + CO2. It functions in the pathway phospholipid metabolism; phosphatidylethanolamine biosynthesis; phosphatidylethanolamine from CDP-diacylglycerol: step 2/2. Catalyzes the formation of phosphatidylethanolamine (PtdEtn) from phosphatidylserine (PtdSer). The polypeptide is Phosphatidylserine decarboxylase proenzyme (Citrifermentans bemidjiense (strain ATCC BAA-1014 / DSM 16622 / JCM 12645 / Bem) (Geobacter bemidjiensis)).